Here is a 560-residue protein sequence, read N- to C-terminus: Embryonal Fyn-associated substrate (560 aa).

The region spanning 5–68 (TSAQLARALY…PANRVKLLPA (64 aa)) is the SH3 domain. Disordered regions lie at residues 176–219 (VVPQ…LYAA) and 241–372 (ANGE…NEYE). Residues 198–210 (AELERDPEWEGGR) are compositionally biased toward basic and acidic residues. The residue at position 253 (Tyr-253) is a Phosphotyrosine; by SRC. Pro residues predominate over residues 259 to 268 (GPEPPSPEPP). 2 consecutive short sequence motifs (SH3-binding) follow at residues 304–310 (RPLPALP) and 334–340 (RPLPPPP). Over residues 305 to 315 (PLPALPVSEAP) the composition is skewed to low complexity. Residues 351–361 (PEGDPECREVA) are compositionally biased toward basic and acidic residues. The interval 437–487 (FYAGQCQSHYSALQAAVAALVASTQANQPPCLFVPHGKRVVVAAHRLVFVG) is divergent helix-loop-helix motif.

This sequence belongs to the CAS family. In terms of processing, phosphorylated on multiple tyrosine residues. Phosphorylated on tyrosines by FYN and SRC. Widely expressed. Higher levels found in placenta and embryo. Lower levels found in brain, brainstem, muscle and lung. No expression in liver and intestine.

Functionally, docking protein which plays a central coordinating role for tyrosine-kinase-based signaling related to cell adhesion. May serve as an activator of SRC and a downstream effector. Interacts with the SH3 domain of FYN and with CRK, SRC, and YES. The protein is Embryonal Fyn-associated substrate (Efs) of Mus musculus (Mouse).